A 162-amino-acid chain; its full sequence is Probable chemoreceptor glutamine deamidase CheD (162 aa).

It belongs to the CheD family.

The enzyme catalyses L-glutaminyl-[protein] + H2O = L-glutamyl-[protein] + NH4(+). Functionally, probably deamidates glutamine residues to glutamate on methyl-accepting chemotaxis receptors (MCPs), playing an important role in chemotaxis. This Syntrophotalea carbinolica (strain DSM 2380 / NBRC 103641 / GraBd1) (Pelobacter carbinolicus) protein is Probable chemoreceptor glutamine deamidase CheD.